We begin with the raw amino-acid sequence, 172 residues long: Protein-export protein SecB (172 aa).

The protein belongs to the SecB family. Homotetramer, a dimer of dimers. One homotetramer interacts with 1 SecA dimer.

Its subcellular location is the cytoplasm. In terms of biological role, one of the proteins required for the normal export of preproteins out of the cell cytoplasm. It is a molecular chaperone that binds to a subset of precursor proteins, maintaining them in a translocation-competent state. It also specifically binds to its receptor SecA. The polypeptide is Protein-export protein SecB (Stenotrophomonas maltophilia (strain K279a)).